The sequence spans 755 residues: MRPAPIALWLRLVLALALVRPRAVGWAPVRAPIYVSSWAVQVSQGNREVERLARKFGFVNLGPIFPDGQYFHLRHRGVVQQSLTPHWGHRLHLKKNPKVQWFQQQTLQRRVKRSVVVPTDPWFSKQWYMNSEAQPDLSILQAWSQGLSGQGIVVSVLDDGIEKDHPDLWANYDPLASYDFNDYDPDPQPRYTPSKENRHGTRCAGEVAAMANNGFCGVGVAFNARIGGVRMLDGTITDVIEAQSLSLQPQHIHIYSASWGPEDDGRTVDGPGILTREAFRRGVTKGRGGLGTLFIWASGNGGLHYDNCNCDGYTNSIHTLSVGSTTQQGRVPWYSEACASTLTTTYSSGVATDPQIVTTDLHHGCTDQHTGTSASAPLAAGMIALALEANPFLTWRDMQHLVVRASKPAHLQAEDWRTNGVGRQVSHHYGYGLLDAGLLVDTARTWLPTQPQRKCAVRVQSRPTPILPLIYIRENVSACAGLHNSIRSLEHVQAQLTLSYSRRGDLEISLTSPMGTRSTLVAIRPLDVSTEGYNNWVFMSTHFWDENPQGVWTLGLENKGYYFNTGTLYRYTLLLYGTAEDMTARPTGPQVTSSACVQRDTEGLCQACDGPAYILGQLCLAYCPPRFFNHTRLVTAGPGHTAAPALRVCSSCHASCYTCRGGSPRDCTSCPPSSTLDQQQGSCMGPTTPDSRPRLRAAACPHHRCPASAMVLSLLAVTLGGPVLCGMSMDLPLYAWLSRARATPTKPQVWLPAGT.

The N-terminal stretch at 1–25 (MRPAPIALWLRLVLALALVRPRAVG) is a signal peptide. Residues 26–113 (WAPVRAPIYV…QQTLQRRVKR (88 aa)) constitute a propeptide that is removed on maturation. A Peptidase S8 domain is found at 126-440 (QWYMNSEAQP…YGLLDAGLLV (315 aa)). Catalysis depends on charge relay system residues Asp158, His199, and Ser373. The P/Homo B domain maps to 449-581 (TQPQRKCAVR…TLLLYGTAED (133 aa)). Asn475 and Asn629 each carry an N-linked (GlcNAc...) asparagine glycan. The chain crosses the membrane as a helical span at residues 709 to 729 (AMVLSLLAVTLGGPVLCGMSM).

It belongs to the peptidase S8 family. Furin subfamily. The proPCSK4 form interacts with HSPA5; the interaction takes place at the endoplasmic reticulum. In terms of processing, N-glycosylated. Synthesized in the endoplasmic reticulum as a zymogen, is matured by autocatalytic cleavage between the prodomain and the catalytic domain. As to expression, placenta.

The protein resides in the membrane. It localises to the cytoplasmic vesicle. Its subcellular location is the secretory vesicle. The protein localises to the acrosome membrane. Proprotein convertase involved in the processing of hormone and other protein precursors at sites comprised of pairs of basic amino acid residues. In males, important for ADAM2 processing as well as other acrosomal proteins with roles in fertilization and critical for normal fertilization events such as sperm capacitation, acrosome reaction and binding of sperm to zona pellucida. Also plays a role in female fertility, involved in the regulation of trophoblast migration and placental development, may be through the proteolytical processing and activation of proteins such as IGF2. May also participate in folliculogenesis in the ovaries. The sequence is that of Proprotein convertase subtilisin/kexin type 4 from Homo sapiens (Human).